The primary structure comprises 462 residues: Adenylosuccinate lyase (462 aa).

N(6)-(1,2-dicarboxyethyl)-AMP-binding positions include 21–22, 87–89, and 114–115; these read RY, KHD, and TS. H162 acts as the Proton donor/acceptor in catalysis. Q236 lines the N(6)-(1,2-dicarboxyethyl)-AMP pocket. S287 (proton donor/acceptor) is an active-site residue. Residues S288, 293-295, and 332-336 contribute to the N(6)-(1,2-dicarboxyethyl)-AMP site; these read KRN and SAERC.

Belongs to the lyase 1 family. Adenylosuccinate lyase subfamily. As to quaternary structure, homotetramer. Residues from neighboring subunits contribute catalytic and substrate-binding residues to each active site.

The enzyme catalyses N(6)-(1,2-dicarboxyethyl)-AMP = fumarate + AMP. The catalysed reaction is (2S)-2-[5-amino-1-(5-phospho-beta-D-ribosyl)imidazole-4-carboxamido]succinate = 5-amino-1-(5-phospho-beta-D-ribosyl)imidazole-4-carboxamide + fumarate. Its pathway is purine metabolism; AMP biosynthesis via de novo pathway; AMP from IMP: step 2/2. The protein operates within purine metabolism; IMP biosynthesis via de novo pathway; 5-amino-1-(5-phospho-D-ribosyl)imidazole-4-carboxamide from 5-amino-1-(5-phospho-D-ribosyl)imidazole-4-carboxylate: step 2/2. Functionally, catalyzes two reactions in de novo purine nucleotide biosynthesis. Catalyzes the breakdown of 5-aminoimidazole- (N-succinylocarboxamide) ribotide (SAICAR or 2-[5-amino-1-(5-phospho-beta-D-ribosyl)imidazole-4-carboxamido]succinate) to 5-aminoimidazole-4-carboxamide ribotide (AICAR or 5-amino-1-(5-phospho-beta-D-ribosyl)imidazole-4-carboxamide) and fumarate, and of adenylosuccinate (ADS or N(6)-(1,2-dicarboxyethyl)-AMP) to adenosine monophosphate (AMP) and fumarate. The sequence is that of Adenylosuccinate lyase (purB) from Methanocaldococcus jannaschii (strain ATCC 43067 / DSM 2661 / JAL-1 / JCM 10045 / NBRC 100440) (Methanococcus jannaschii).